The following is a 174-amino-acid chain: dCTP deaminase, dUMP-forming (174 aa).

DCTP-binding positions include 93–98 (RSSIGR), aspartate 111, 119–121 (TLE), glutamine 138, and tyrosine 151. Glutamate 121 functions as the Proton donor/acceptor in the catalytic mechanism.

It belongs to the dCTP deaminase family. In terms of assembly, homotrimer.

It carries out the reaction dCTP + 2 H2O = dUMP + NH4(+) + diphosphate. Its pathway is pyrimidine metabolism; dUMP biosynthesis; dUMP from dCTP: step 1/1. Its function is as follows. Bifunctional enzyme that catalyzes both the deamination of dCTP to dUTP and the hydrolysis of dUTP to dUMP without releasing the toxic dUTP intermediate. This is dCTP deaminase, dUMP-forming from Leptospira biflexa serovar Patoc (strain Patoc 1 / Ames).